The chain runs to 178 residues: ATP-dependent protease subunit HslV (178 aa).

The active site involves Thr7. Gly162, Cys165, and Thr168 together coordinate Na(+).

Belongs to the peptidase T1B family. HslV subfamily. As to quaternary structure, a double ring-shaped homohexamer of HslV is capped on each side by a ring-shaped HslU homohexamer. The assembly of the HslU/HslV complex is dependent on binding of ATP.

The protein localises to the cytoplasm. The enzyme catalyses ATP-dependent cleavage of peptide bonds with broad specificity.. With respect to regulation, allosterically activated by HslU binding. In terms of biological role, protease subunit of a proteasome-like degradation complex believed to be a general protein degrading machinery. This chain is ATP-dependent protease subunit HslV, found in Paraburkholderia xenovorans (strain LB400).